A 127-amino-acid polypeptide reads, in one-letter code: MMRQSVQTVLPESTGNNTLSLRDSVCRDLFQLFSSPHSPLPILLVSGMPEWQGHNQSDKLLQSWYCRQLRSALLFHEPRIAALQVNLKAVYCHELVISLDMMLYHDDEPLTFDLVWQKGSWHRTMPQ.

It belongs to the GpW/Gp25 family. IraD subfamily. As to quaternary structure, interacts with RssB.

Its subcellular location is the cytoplasm. Its function is as follows. Inhibits RpoS proteolysis by regulating RssB activity, thereby increasing the stability of the sigma stress factor RpoS during oxidative stress. Its effect on RpoS stability is due to its interaction with RssB, which probably blocks the interaction of RssB with RpoS, and the consequent delivery of the RssB-RpoS complex to the ClpXP protein degradation pathway. This is Anti-adapter protein IraD from Escherichia coli O127:H6 (strain E2348/69 / EPEC).